Here is a 441-residue protein sequence, read N- to C-terminus: EMI domain-containing protein 1 (441 aa).

Positions 1–22 are cleaved as a signal peptide; that stretch reads MGGPRAWALLCLGLLLPGGGAA. The EMI domain maps to 33–106; that stretch reads RRNWCSYVVT…PGHSGVSCEE (74 aa). 3 cysteine pairs are disulfide-bonded: Cys37-Cys96, Cys62-Cys68, and Cys95-Cys104. The O-linked (Fuc) threonine glycan is linked to Thr42. Asn51 carries an N-linked (GlcNAc...) asparagine glycan. An N-linked (GlcNAc...) asparagine glycan is attached at Asn136. 2 disordered regions span residues 162–371 and 405–441; these read QPVP…KSHW and SGAG…DERG. Pro residues-rich tracts occupy residues 163-184 and 222-231; these read PVPP…PPAQ and PPGPQGPPGS. The 190-residue stretch at 179-368 folds into the Collagen-like domain; it reads GPPPAQGSPG…PGPKGDPGEK (190 aa). Over residues 232–243 the composition is skewed to low complexity; the sequence is PGRAGAVGTPGE. Residues 244-264 show a composition bias toward pro residues; the sequence is RGPPGPPGPPGPPGPPAPVGP. Residues 277–288 show a composition bias toward polar residues; it reads LSNTFTETNNHW. Residues 292–311 show a composition bias toward pro residues; the sequence is PTGPPGPPGPMGPPGPPGPT. 2 stretches are compositionally biased toward basic and acidic residues: residues 335 to 344 and 359 to 371; these read PGEKGERGLR and PGPK…KSHW.

Homo- or heteromers. O-fucosylated at Thr-42 within the EMI domain by FUT10/POFUT3 and FUT11/POFUT4.

It is found in the secreted. Its subcellular location is the extracellular space. It localises to the extracellular matrix. The protein is EMI domain-containing protein 1 (EMID1) of Homo sapiens (Human).